Reading from the N-terminus, the 215-residue chain is Small ribosomal subunit protein uS5 (215 aa).

The tract at residues 1 to 62 (MTDSSPQSNP…QERDSEWQER (62 aa)) is disordered. Residues 9-28 (NPNAVPGAADVPAAAEGQQQ) show a composition bias toward low complexity. Residues 29-61 (EQRRGGGRGERGDRRGGRRGDRRNQERDSEWQE) are compositionally biased toward basic and acidic residues. In terms of domain architecture, S5 DRBM spans 59–122 (WQERVVQIRR…ADGKKHLVKV (64 aa)).

This sequence belongs to the universal ribosomal protein uS5 family. In terms of assembly, part of the 30S ribosomal subunit. Contacts proteins S4 and S8.

Functionally, with S4 and S12 plays an important role in translational accuracy. Its function is as follows. Located at the back of the 30S subunit body where it stabilizes the conformation of the head with respect to the body. The protein is Small ribosomal subunit protein uS5 of Parasynechococcus marenigrum (strain WH8102).